A 327-amino-acid polypeptide reads, in one-letter code: Phenylalanine--tRNA ligase alpha subunit (327 aa).

Residue Glu252 participates in Mg(2+) binding.

The protein belongs to the class-II aminoacyl-tRNA synthetase family. Phe-tRNA synthetase alpha subunit type 1 subfamily. In terms of assembly, tetramer of two alpha and two beta subunits. It depends on Mg(2+) as a cofactor.

The protein resides in the cytoplasm. It carries out the reaction tRNA(Phe) + L-phenylalanine + ATP = L-phenylalanyl-tRNA(Phe) + AMP + diphosphate + H(+). This chain is Phenylalanine--tRNA ligase alpha subunit, found in Escherichia coli O139:H28 (strain E24377A / ETEC).